Here is a 341-residue protein sequence, read N- to C-terminus: Limbic system-associated membrane protein (341 aa).

The signal sequence occupies residues 1–28 (MVGRVQPDRKQLPLVLLRLLCLLPTGLP). 3 consecutive Ig-like domains span residues 29–122 (VRSV…PKTS), 132–214 (PKIS…VKVT), and 219–304 (PTIT…ASLV). N-linked (GlcNAc...) asparagine glycans are attached at residues N40 and N66. C53 and C111 form a disulfide bridge. Residue Y94 is modified to Phosphotyrosine. N-linked (GlcNAc...) asparagine glycosylation is found at N136 and N148. 2 cysteine pairs are disulfide-bonded: C153/C197 and C239/C290. 3 N-linked (GlcNAc...) asparagine glycosylation sites follow: N279, N287, and N300.

Belongs to the immunoglobulin superfamily. IgLON family.

Its subcellular location is the cell membrane. In terms of biological role, mediates selective neuronal growth and axon targeting. Contributes to the guidance of developing axons and remodeling of mature circuits in the limbic system. Essential for normal growth of the hippocampal mossy fiber projection. In Mus musculus (Mouse), this protein is Limbic system-associated membrane protein (Lsamp).